The chain runs to 449 residues: tRNA-2-methylthio-N(6)-dimethylallyladenosine synthase (449 aa).

The MTTase N-terminal domain maps to lysine 3 to serine 124. Residues cysteine 12, cysteine 48, cysteine 87, cysteine 163, cysteine 167, and cysteine 170 each coordinate [4Fe-4S] cluster. The 232-residue stretch at lysine 149 to glutamate 380 folds into the Radical SAM core domain. The 65-residue stretch at glutamine 383–alanine 447 folds into the TRAM domain.

Belongs to the methylthiotransferase family. MiaB subfamily. As to quaternary structure, monomer. [4Fe-4S] cluster is required as a cofactor.

It localises to the cytoplasm. The catalysed reaction is N(6)-dimethylallyladenosine(37) in tRNA + (sulfur carrier)-SH + AH2 + 2 S-adenosyl-L-methionine = 2-methylsulfanyl-N(6)-dimethylallyladenosine(37) in tRNA + (sulfur carrier)-H + 5'-deoxyadenosine + L-methionine + A + S-adenosyl-L-homocysteine + 2 H(+). Functionally, catalyzes the methylthiolation of N6-(dimethylallyl)adenosine (i(6)A), leading to the formation of 2-methylthio-N6-(dimethylallyl)adenosine (ms(2)i(6)A) at position 37 in tRNAs that read codons beginning with uridine. The chain is tRNA-2-methylthio-N(6)-dimethylallyladenosine synthase from Orientia tsutsugamushi (strain Ikeda) (Rickettsia tsutsugamushi).